Consider the following 477-residue polypeptide: Ribulose bisphosphate carboxylase large chain (477 aa).

A propeptide spanning residues 1-2 is cleaved from the precursor; the sequence is MS. The residue at position 3 (proline 3) is an N-acetylproline. Lysine 14 carries the post-translational modification N6,N6,N6-trimethyllysine. Asparagine 123 and threonine 173 together coordinate substrate. Lysine 175 acts as the Proton acceptor in catalysis. Lysine 177 is a binding site for substrate. 3 residues coordinate Mg(2+): lysine 201, aspartate 203, and glutamate 204. Position 201 is an N6-carboxylysine (lysine 201). Histidine 294 (proton acceptor) is an active-site residue. The substrate site is built by arginine 295, histidine 327, and serine 379.

It belongs to the RuBisCO large chain family. Type I subfamily. Heterohexadecamer of 8 large chains and 8 small chains; disulfide-linked. The disulfide link is formed within the large subunit homodimers. It depends on Mg(2+) as a cofactor. Post-translationally, the disulfide bond which can form in the large chain dimeric partners within the hexadecamer appears to be associated with oxidative stress and protein turnover.

The protein localises to the plastid. Its subcellular location is the chloroplast. The enzyme catalyses 2 (2R)-3-phosphoglycerate + 2 H(+) = D-ribulose 1,5-bisphosphate + CO2 + H2O. It catalyses the reaction D-ribulose 1,5-bisphosphate + O2 = 2-phosphoglycolate + (2R)-3-phosphoglycerate + 2 H(+). In terms of biological role, ruBisCO catalyzes two reactions: the carboxylation of D-ribulose 1,5-bisphosphate, the primary event in carbon dioxide fixation, as well as the oxidative fragmentation of the pentose substrate in the photorespiration process. Both reactions occur simultaneously and in competition at the same active site. This is Ribulose bisphosphate carboxylase large chain from Nicotiana tomentosiformis (Tobacco).